Here is a 2813-residue protein sequence, read N- to C-terminus: von Willebrand factor (2813 aa).

Residues 1–22 form the signal peptide; the sequence is MSPTRLVRVLLALALILPGKLC. Positions 23–763 are excised as a propeptide; sequence TKGTVGRSSM…SSPRSHRSKR (741 aa). The region spanning 33–201 is the VWFD 1 domain; it reads ARCSLFGGDF…ALSSGEQRCK (169 aa). 2 cysteine pairs are disulfide-bonded: C35/C162 and C57/C200. Residues N99, N156, and N211 are each glycosylated (N-linked (GlcNAc...) asparagine). The region spanning 295-348 is the TIL 1 domain; the sequence is CPAGMEYKECVSPCTRTCQSLHVKEVCQEQCVDGCSCPEGQLLDEGHCVGSAEC. A VWFD 2 domain is found at 386-560; the sequence is GECLVTGQSH…NAWKLLGACE (175 aa). Intrachain disulfides connect C388/C524, C410/C559, and C432/C440. Positions 531–533 match the Cell attachment site motif; the sequence is RGD. TIL domains lie at 652–707 and 776–827; these read CPQG…KAQC and CPAD…LERC. N-linked (GlcNAc...) asparagine glycosylation occurs at N666. The short motif at 698–700 is the Cell attachment site element; sequence RGD. The tract at residues 764–787 is amino-terminal; it reads SLSCRPPMVKLVCPADNPRAEGLE. Disulfide bonds link C767-C808, C776-C804, and C810-C821. An E1 region spans residues 788–833; sequence CAKTCQNYDLQCMSTGCVSGCLCPQGMVRHENRCVALERCPCFHQG. Residues 826–853 are CX; sequence RCPCFHQGQEYAPGETVKIDCNTCVCRD. N857 carries an N-linked (GlcNAc...) asparagine glycan. A VWFD 3 domain is found at 865–1032; the sequence is ATCSAIGMAH…NSWKVNPQCA (168 aa). Intrachain disulfides connect C867–C996, C889–C1031, C898–C993, C914–C921, C1060–C1084, C1071–C1111, C1089–C1091, C1126–C1130, C1149–C1169, C1153–C1165, and C1196–C1199. In terms of domain architecture, TIL 4 spans 1146–1196; that stretch reads YNSCAPACPITCQHPEPLACPVQCVEGCHAHCPPGKILDELLQTCIDPEDC. N-linked (GlcNAc...) asparagine glycosylation occurs at N1231. 2 cysteine pairs are disulfide-bonded: C1234–C1237 and C1272–C1458. 2 VWFA domains span residues 1277–1453 and 1498–1665; these read DLVF…RDEI and DVVF…PDLV. N-linked (GlcNAc...) asparagine glycans are attached at residues N1515 and N1574. 8 disulfides stabilise this stretch: C1669–C1670, C1686–C1872, C1879–C1904, C1899–C1940, C1927–C2088, C1950–C2085, C1972–C2123, and C1993–C2001. One can recognise a VWFA 3 domain in the interval 1691 to 1871; the sequence is DVVLLLDGSS…TLGNSFFHKL (181 aa). One can recognise a VWFD 4 domain in the interval 1948–2124; it reads CVCMGSSTRH…TVQQLGKTCQ (177 aa). The interval 2216–2261 is E2; that stretch reads CPRLCEGNTSSCGDQPSEGCFCPPNQVMLEGSCVPEEACTQCISED. N-linked (GlcNAc...) asparagine glycosylation is found at N2223, N2290, N2357, and N2400. The region spanning 2255–2328 is the VWFC 1 domain; that stretch reads TQCISEDGVR…CCPEYECVCD (74 aa). In terms of domain architecture, VWFC 2 spans 2429 to 2495; sequence KVCVHRGTIY…HEGECCGRCL (67 aa). The Cell attachment site motif lies at 2507-2509; the sequence is RGD. N-linked (GlcNAc...) asparagine glycosylation is found at N2546 and N2585. In terms of domain architecture, VWFC 3 spans 2580–2645; sequence EACLLNGTII…NQGECCGRCL (66 aa). 4 disulfides stabilise this stretch: C2724–C2774, C2739–C2788, C2750–C2804, and C2754–C2806. A CTCK domain is found at 2724 to 2812; sequence CKDIIAKLQR…QCRCSPRKCS (89 aa). N-linked (GlcNAc...) asparagine glycosylation is present at N2790.

Multimeric. Interacts with F8. Post-translationally, all cysteine residues are involved in intrachain or interchain disulfide bonds. N- and O-glycosylated. Plasma.

The protein localises to the secreted. The protein resides in the extracellular space. It localises to the extracellular matrix. Functionally, important in the maintenance of hemostasis, it promotes adhesion of platelets to the sites of vascular injury by forming a molecular bridge between sub-endothelial collagen matrix and platelet-surface receptor complex, glycoprotein Ibalpha/IX/V. Also acts as a chaperone for coagulation factor VIII, delivering it to the site of injury, stabilizing its heterodimeric structure and protecting it from premature clearance from plasma. The polypeptide is von Willebrand factor (VWF) (Canis lupus familiaris (Dog)).